Here is a 213-residue protein sequence, read N- to C-terminus: Protein-L-isoaspartate O-methyltransferase (213 aa).

Ser61 is an active-site residue.

This sequence belongs to the methyltransferase superfamily. L-isoaspartyl/D-aspartyl protein methyltransferase family.

The protein resides in the cytoplasm. It catalyses the reaction [protein]-L-isoaspartate + S-adenosyl-L-methionine = [protein]-L-isoaspartate alpha-methyl ester + S-adenosyl-L-homocysteine. In terms of biological role, catalyzes the methyl esterification of L-isoaspartyl residues in peptides and proteins that result from spontaneous decomposition of normal L-aspartyl and L-asparaginyl residues. It plays a role in the repair and/or degradation of damaged proteins. In Petrotoga mobilis (strain DSM 10674 / SJ95), this protein is Protein-L-isoaspartate O-methyltransferase.